The following is a 124-amino-acid chain: uncharacterized protein (124 aa).

Positions K62 to H72 are enriched in basic residues. Residues K62–S86 are disordered. Basic and acidic residues predominate over residues H73–V83. A coiled-coil region spans residues E80–E112.

This is an uncharacterized protein from Dictyostelium discoideum (Social amoeba).